The primary structure comprises 208 residues: Protein GrpE (208 aa).

The segment covering 1–27 (MERMNQSRKVPIHDAAEESSAEAHETQ) has biased composition (basic and acidic residues). Positions 1-65 (MERMNQSRKV…AEEAQEEEAA (65 aa)) are disordered. Positions 45 to 64 (MAEEAVEQAQDAEEAQEEEA) are enriched in acidic residues.

This sequence belongs to the GrpE family. In terms of assembly, homodimer.

The protein localises to the cytoplasm. Participates actively in the response to hyperosmotic and heat shock by preventing the aggregation of stress-denatured proteins, in association with DnaK and GrpE. It is the nucleotide exchange factor for DnaK and may function as a thermosensor. Unfolded proteins bind initially to DnaJ; upon interaction with the DnaJ-bound protein, DnaK hydrolyzes its bound ATP, resulting in the formation of a stable complex. GrpE releases ADP from DnaK; ATP binding to DnaK triggers the release of the substrate protein, thus completing the reaction cycle. Several rounds of ATP-dependent interactions between DnaJ, DnaK and GrpE are required for fully efficient folding. This is Protein GrpE from Desulfatibacillum aliphaticivorans.